The chain runs to 204 residues: Large ribosomal subunit protein uL4 (204 aa).

Residues 49 to 76 (KTKGISDVSGTTAKPYGQKRTGRARQGS) are disordered.

Belongs to the universal ribosomal protein uL4 family. Part of the 50S ribosomal subunit.

Functionally, one of the primary rRNA binding proteins, this protein initially binds near the 5'-end of the 23S rRNA. It is important during the early stages of 50S assembly. It makes multiple contacts with different domains of the 23S rRNA in the assembled 50S subunit and ribosome. Forms part of the polypeptide exit tunnel. This chain is Large ribosomal subunit protein uL4, found in Wolbachia sp. subsp. Drosophila simulans (strain wRi).